The sequence spans 126 residues: Histone H2B type 1-B (126 aa).

Residues 1-12 (MPEPSKSAPAPK) show a composition bias toward low complexity. The interval 1–36 (MPEPSKSAPAPKKGSKKAISKAQKKDGKKRKRSRKE) is disordered. Proline 2 is subject to N-acetylproline. Position 3 is an ADP-ribosyl glutamic acid (glutamate 3). Residue lysine 6 is modified to N6-(2-hydroxyisobutyryl)lysine; alternate. The residue at position 6 (lysine 6) is an N6-(beta-hydroxybutyryl)lysine; alternate. Lysine 6 carries the post-translational modification N6-acetyllysine; alternate. Lysine 6 bears the N6-butyryllysine; alternate mark. Lysine 6 bears the N6-crotonyllysine; alternate mark. An N6-lactoyllysine; alternate modification is found at lysine 6. Residue lysine 6 forms a Glycyl lysine isopeptide (Lys-Gly) (interchain with G-Cter in SUMO2); alternate linkage. Position 7 is an ADP-ribosylserine (serine 7). At lysine 12 the chain carries N6-(beta-hydroxybutyryl)lysine; alternate. N6-acetyllysine; alternate is present on residues lysine 12 and lysine 13. Residues lysine 12 and lysine 13 each carry the N6-crotonyllysine; alternate modification. N6-lactoyllysine; alternate is present on lysine 12. Lysine 13 is subject to N6-(2-hydroxyisobutyryl)lysine; alternate. Position 15 is a phosphoserine; by STK4/MST1 (serine 15). Residues lysine 16, lysine 17, lysine 21, and lysine 24 each carry the N6-acetyllysine; alternate modification. An N6-crotonyllysine; alternate mark is found at lysine 16, lysine 17, lysine 21, and lysine 24. N6-lactoyllysine; alternate occurs at positions 16, 17, 21, and 24. Lysine 17 carries the post-translational modification N6-glutaryllysine; alternate. N6-(2-hydroxyisobutyryl)lysine; alternate is present on residues lysine 21 and lysine 24. At lysine 21 the chain carries N6-(beta-hydroxybutyryl)lysine; alternate. The residue at position 21 (lysine 21) is an N6-butyryllysine; alternate. Lysine 21 is covalently cross-linked (Glycyl lysine isopeptide (Lys-Gly) (interchain with G-Cter in SUMO2); alternate). Lysine 25 is subject to N6-(2-hydroxyisobutyryl)lysine. Lysine 35 is modified (N6-(2-hydroxyisobutyryl)lysine; alternate). At lysine 35 the chain carries N6-(beta-hydroxybutyryl)lysine; alternate. An N6-crotonyllysine; alternate modification is found at lysine 35. Lysine 35 bears the N6-glutaryllysine; alternate mark. Lysine 35 carries the N6-succinyllysine; alternate modification. Lysine 35 is covalently cross-linked (Glycyl lysine isopeptide (Lys-Gly) (interchain with G-Cter in ubiquitin); alternate). Glutamate 36 carries the post-translational modification PolyADP-ribosyl glutamic acid. At serine 37 the chain carries Phosphoserine; by AMPK. N6-(2-hydroxyisobutyryl)lysine; alternate occurs at positions 44, 47, and 58. An N6-lactoyllysine; alternate modification is found at lysine 44. Residues lysine 44 and lysine 47 each carry the N6-glutaryllysine; alternate modification. At lysine 47 the chain carries N6-methyllysine; alternate. Lysine 58 carries the post-translational modification N6,N6-dimethyllysine; alternate. Arginine 80 is subject to Dimethylated arginine. Lysine 86 is subject to N6-(2-hydroxyisobutyryl)lysine; alternate. Residue lysine 86 is modified to N6-acetyllysine; alternate. Residue lysine 86 is modified to N6-lactoyllysine; alternate. Lysine 86 is subject to N6,N6,N6-trimethyllysine; alternate. Omega-N-methylarginine occurs at positions 87 and 93. Lysine 109 is modified (N6-(2-hydroxyisobutyryl)lysine; alternate). Lysine 109 carries the post-translational modification N6-(beta-hydroxybutyryl)lysine; alternate. At lysine 109 the chain carries N6-lactoyllysine; alternate. Position 109 is an N6-glutaryllysine; alternate (lysine 109). Lysine 109 carries the N6-methyllysine; alternate modification. O-linked (GlcNAc) serine glycosylation is present at serine 113. At threonine 116 the chain carries Phosphothreonine. N6-(2-hydroxyisobutyryl)lysine; alternate is present on residues lysine 117 and lysine 121. Lysine 117 carries the N6-(beta-hydroxybutyryl)lysine; alternate modification. N6-lactoyllysine; alternate is present on residues lysine 117 and lysine 121. N6-glutaryllysine; alternate is present on residues lysine 117 and lysine 121. N6-succinyllysine; alternate is present on residues lysine 117 and lysine 121. Residue lysine 117 is modified to N6-methylated lysine; alternate. Lysine 121 is covalently cross-linked (Glycyl lysine isopeptide (Lys-Gly) (interchain with G-Cter in ubiquitin); alternate).

The protein belongs to the histone H2B family. In terms of assembly, the nucleosome is a histone octamer containing two molecules each of H2A, H2B, H3 and H4 assembled in one H3-H4 heterotetramer and two H2A-H2B heterodimers. The octamer wraps approximately 147 bp of DNA. In terms of processing, monoubiquitination at Lys-35 (H2BK34Ub) by the MSL1/MSL2 dimer is required for histone H3 'Lys-4' (H3K4me) and 'Lys-79' (H3K79me) methylation and transcription activation at specific gene loci, such as HOXA9 and MEIS1 loci. Similarly, monoubiquitination at Lys-121 (H2BK120Ub) by the RNF20/40 complex gives a specific tag for epigenetic transcriptional activation and is also prerequisite for histone H3 'Lys-4' and 'Lys-79' methylation. It also functions cooperatively with the FACT dimer to stimulate elongation by RNA polymerase II. H2BK120Ub also acts as a regulator of mRNA splicing: deubiquitination by USP49 is required for efficient cotranscriptional splicing of a large set of exons. Phosphorylated on Ser-15 (H2BS14ph) by STK4/MST1 during apoptosis; which facilitates apoptotic chromatin condensation. Also phosphorylated on Ser-15 in response to DNA double strand breaks (DSBs), and in correlation with somatic hypermutation and immunoglobulin class-switch recombination. Phosphorylation at Ser-37 (H2BS36ph) by AMPK in response to stress promotes transcription. Post-translationally, glcNAcylation at Ser-113 promotes monoubiquitination of Lys-121. It fluctuates in response to extracellular glucose, and associates with transcribed genes. In terms of processing, ADP-ribosylated by PARP1 or PARP2 on Ser-7 (H2BS6ADPr) in response to DNA damage. H2BS6ADPr promotes recruitment of CHD1L. Mono-ADP-ribosylated on Glu-3 (H2BE2ADPr) by PARP3 in response to single-strand breaks. Poly ADP-ribosylation on Glu-36 (H2BE35ADPr) by PARP1 regulates adipogenesis: it inhibits phosphorylation at Ser-37 (H2BS36ph), thereby blocking expression of pro-adipogenetic genes. Hydroxybutyrylation of histones is induced by starvation. Post-translationally, crotonylation (Kcr) is specifically present in male germ cells and marks testis-specific genes in post-meiotic cells, including X-linked genes that escape sex chromosome inactivation in haploid cells. Crotonylation marks active promoters and enhancers and confers resistance to transcriptional repressors. It is also associated with post-meiotically activated genes on autosomes. In terms of processing, lactylated in macrophages by EP300/P300 by using lactoyl-CoA directly derived from endogenous or exogenous lactate, leading to stimulates gene transcription.

It is found in the nucleus. The protein localises to the chromosome. In terms of biological role, core component of nucleosome. Nucleosomes wrap and compact DNA into chromatin, limiting DNA accessibility to the cellular machineries which require DNA as a template. Histones thereby play a central role in transcription regulation, DNA repair, DNA replication and chromosomal stability. DNA accessibility is regulated via a complex set of post-translational modifications of histones, also called histone code, and nucleosome remodeling. This Mus musculus (Mouse) protein is Histone H2B type 1-B.